A 307-amino-acid chain; its full sequence is Elongation factor Ts (307 aa).

The segment at 79–82 (TDFV) is involved in Mg(2+) ion dislocation from EF-Tu.

This sequence belongs to the EF-Ts family.

It localises to the cytoplasm. Its function is as follows. Associates with the EF-Tu.GDP complex and induces the exchange of GDP to GTP. It remains bound to the aminoacyl-tRNA.EF-Tu.GTP complex up to the GTP hydrolysis stage on the ribosome. The polypeptide is Elongation factor Ts (Sinorhizobium fredii (strain NBRC 101917 / NGR234)).